A 207-amino-acid chain; its full sequence is Small ribosomal subunit protein uS10m (207 aa).

A mitochondrion-targeting transit peptide spans 1 to 14 (MNMFRQAVRSFVRY).

Belongs to the universal ribosomal protein uS10 family. In terms of assembly, part of the mitochondrial small ribosomal subunit.

Its subcellular location is the mitochondrion. Involved in mitochondrial genome encoded proteins translation. Involved in the binding of tRNA to the ribosomes. The sequence is that of Small ribosomal subunit protein uS10m (RSM10) from Kluyveromyces lactis (strain ATCC 8585 / CBS 2359 / DSM 70799 / NBRC 1267 / NRRL Y-1140 / WM37) (Yeast).